A 537-amino-acid chain; its full sequence is Serendipity locus protein alpha (537 aa).

The protein localises to the cytoplasm. It is found in the cell membrane. Its function is as follows. Required for the cellularization of the syncytial blastoderm embryo. Involved in the localization of the actin filaments just prior to and during plasma membrane invagination. Sry-alpha together with nullo and bnk may provide auxiliary functions, by acting both to stabilize a large and dynamic microfilament structure and regulate its functions. The polypeptide is Serendipity locus protein alpha (Sry-alpha) (Drosophila virilis (Fruit fly)).